Here is an 830-residue protein sequence, read N- to C-terminus: MKTPTRVSFEKKIHTPPSGDRDAERSPPKKFLRGLSGKVFRKTPEFKKQQMPTFGYIEESQFTPNLGLMMSKRGNIPKPLNLSKPISPPPSLKKTAGSVASGFSKTGQLSALQSPVNITSSNKYNIKATNLTTSLLRESISDSTTMCDTLSDINLTVMDEDYRIDGDSYYEEDSPTFMISLERNIKKCNSQFSPKRYIGEKCLICEESISSTFTGEKVVESTCSHTSHYNCYLMLFETLYFQGKFPECKICGEVSKPKDKDIVPEMVSKLLTGAGAHDDGPSSNMQQQWIDLKTARSFTGEFPQFTPQEQLIRTADISCDGFRTPRLSNSNQFEAVSYLDSPFLNSPFVNKMATTDPFDLSDDEKLDCDDEIDESAAEVWFSKTGGEHVMVSVKFQEMRTSDDLGVLQDVNHVDHEELEEREKEWKKKIDQYIETNVDKDSEFGSLILFDKLMYSDDGEQWVDNNLVILFSKFLVLFDFEEMKILGKIPRDQFYQVIKFNEDVLLCSLKSTNIPEIYLRFNENCEKWLLPKWKYCLENSSLETLPLSEIVSTVKELSHVNIIGALGAPPDVISAQSHDSRLPWKRLHSDTPLKLIVCLNLSHADGELYRKRVLKSVHQILDGLNTDDLLGIVVVGRDGSGVVGPFGTFIGMINKNWDGWTTFLDNLEVVNPNVFRDEKQQYKVTLQTCERLASTSAYVDTDDHIATGYAKQILVLNGSDVVDIEHDQKLKKAFDQLSYHWRYEISQRRMTPLNASIKQFLEELHTKRYLDVTLRLPQATFEQVYLGDMAAGEQKTRLIMDEHPHSSLIEIEYFDLVKQQRIHQTLEVPNL.

Residues 1–31 (MKTPTRVSFEKKIHTPPSGDRDAERSPPKKF) form a disordered region. Residues 8 to 27 (SFEKKIHTPPSGDRDAERSP) show a composition bias toward basic and acidic residues. Serine 87 bears the Phosphoserine; by CDC28 mark. A phosphoserine mark is found at serine 110 and serine 114. An RING-type zinc finger spans residues 202-252 (CLICEESISSTFTGEKVVESTCSHTSHYNCYLMLFETLYFQGKFPECKICG). At threonine 306 the chain carries Phosphothreonine.

In terms of assembly, associates with the CDC28-CLN complex. Post-translationally, thought to be phosphorylated by MAP kinase FUS3. Thought to enhance the binding of FAR1 to G1-specific cyclin-dependent kinase (CDK) complexes.

Functionally, inhibitor of the cyclin-dependent kinase CDC28. Necessary for cell cycle arrest. Involved in pheromone response. Contributes to mating efficiency. Required for oriented polarization of yeast cells in response to mating pheromones. The sequence is that of Cyclin-dependent kinase inhibitor FAR1 (FAR1) from Saccharomyces cerevisiae (strain ATCC 204508 / S288c) (Baker's yeast).